The sequence spans 397 residues: Tryptophan synthase beta chain (397 aa).

Lys-89 bears the N6-(pyridoxal phosphate)lysine mark.

This sequence belongs to the TrpB family. Tetramer of two alpha and two beta chains. Pyridoxal 5'-phosphate is required as a cofactor.

The catalysed reaction is (1S,2R)-1-C-(indol-3-yl)glycerol 3-phosphate + L-serine = D-glyceraldehyde 3-phosphate + L-tryptophan + H2O. Its pathway is amino-acid biosynthesis; L-tryptophan biosynthesis; L-tryptophan from chorismate: step 5/5. Functionally, the beta subunit is responsible for the synthesis of L-tryptophan from indole and L-serine. The sequence is that of Tryptophan synthase beta chain from Leptospira interrogans serogroup Icterohaemorrhagiae serovar copenhageni (strain Fiocruz L1-130).